The sequence spans 1360 residues: DNA-directed RNA polymerase subunit beta (1360 aa).

It belongs to the RNA polymerase beta chain family. As to quaternary structure, the RNAP catalytic core consists of 2 alpha, 1 beta, 1 beta' and 1 omega subunit. When a sigma factor is associated with the core the holoenzyme is formed, which can initiate transcription.

It carries out the reaction RNA(n) + a ribonucleoside 5'-triphosphate = RNA(n+1) + diphosphate. In terms of biological role, DNA-dependent RNA polymerase catalyzes the transcription of DNA into RNA using the four ribonucleoside triphosphates as substrates. In Vesicomyosocius okutanii subsp. Calyptogena okutanii (strain HA), this protein is DNA-directed RNA polymerase subunit beta.